The following is a 144-amino-acid chain: Large ribosomal subunit protein uL22 (144 aa).

Residues 1 to 38 (MAETQTTKKGAKRVRQPVPARRSKPNRPAKAAPGPHAS) are disordered. The segment covering 9–27 (KGAKRVRQPVPARRSKPNR) has biased composition (basic residues).

This sequence belongs to the universal ribosomal protein uL22 family. As to quaternary structure, part of the 50S ribosomal subunit.

This protein binds specifically to 23S rRNA; its binding is stimulated by other ribosomal proteins, e.g. L4, L17, and L20. It is important during the early stages of 50S assembly. It makes multiple contacts with different domains of the 23S rRNA in the assembled 50S subunit and ribosome. In terms of biological role, the globular domain of the protein is located near the polypeptide exit tunnel on the outside of the subunit, while an extended beta-hairpin is found that lines the wall of the exit tunnel in the center of the 70S ribosome. This Anaeromyxobacter sp. (strain Fw109-5) protein is Large ribosomal subunit protein uL22.